A 446-amino-acid chain; its full sequence is Argininosuccinate synthase (446 aa).

ATP contacts are provided by residues 17–25 (AFSGGLDTS) and A43. Y99 serves as a coordination point for L-citrulline. Positions 129 and 131 each coordinate ATP. Residues T131, N135, and D136 each contribute to the L-aspartate site. N135 lines the L-citrulline pocket. D136 contributes to the ATP binding site. L-citrulline-binding residues include R139 and S192. Position 194 (D194) interacts with ATP. Residues T201, E203, and E280 each coordinate L-citrulline.

This sequence belongs to the argininosuccinate synthase family. Type 2 subfamily. As to quaternary structure, homotetramer.

The protein localises to the cytoplasm. It carries out the reaction L-citrulline + L-aspartate + ATP = 2-(N(omega)-L-arginino)succinate + AMP + diphosphate + H(+). It participates in amino-acid biosynthesis; L-arginine biosynthesis; L-arginine from L-ornithine and carbamoyl phosphate: step 2/3. This Burkholderia thailandensis (strain ATCC 700388 / DSM 13276 / CCUG 48851 / CIP 106301 / E264) protein is Argininosuccinate synthase.